The following is a 289-amino-acid chain: RING-H2 finger protein ATL30 (289 aa).

The helical transmembrane segment at 26 to 46 (VIILTVILLVVFFIGFFAIYF) threads the bilayer. An RING-type; atypical zinc finger spans residues 114–157 (CAICLLEFEEEHILLRLLTTCYHVFHQECIDQWLESNKTCPVCR). The interval 181–206 (HENRDQEQTSTSNEVMLSRQSSGNNE) is disordered. Residues 188-204 (QTSTSNEVMLSRQSSGN) show a composition bias toward polar residues.

Belongs to the RING-type zinc finger family. ATL subfamily.

Its subcellular location is the membrane. The enzyme catalyses S-ubiquitinyl-[E2 ubiquitin-conjugating enzyme]-L-cysteine + [acceptor protein]-L-lysine = [E2 ubiquitin-conjugating enzyme]-L-cysteine + N(6)-ubiquitinyl-[acceptor protein]-L-lysine.. The protein operates within protein modification; protein ubiquitination. The protein is RING-H2 finger protein ATL30 (ATL30) of Arabidopsis thaliana (Mouse-ear cress).